Reading from the N-terminus, the 174-residue chain is Male-enhanced antigen 1 (174 aa).

2 disordered regions span residues 1–83 (MAAV…DGAA) and 95–123 (HLPDPPLESEDEDEEGAAALSSHSSIPMD). Composition is skewed to acidic residues over residues 38-48 (SSEEPEEEQEE), 65-82 (PEQEEVELAPVGEGEDGA), and 101-110 (LESEDEDEEG). A Phosphoserine modification is found at S103.

Highly expressed in testis. Transcripts can be found in primary and secondary spermatocytes, and spermatids, but the protein itself is only detected in spermatids. No expression in Leydig cells, spermatogonia, or sperm. Very weak expression in the heart, kidney, spleen, thymus and ovary.

Functionally, may play an important role in spermatogenesis and/or testis development. The chain is Male-enhanced antigen 1 (Mea1) from Mus musculus (Mouse).